Reading from the N-terminus, the 125-residue chain is Class III hydrophobin G (125 aa).

The first 20 residues, 1–20, serve as a signal peptide directing secretion; that stretch reads MKPSIVTFLMLAAVTAAVSA. Disulfide bonds link Cys-54/Cys-107, Cys-60/Cys-101, Cys-61/Cys-94, and Cys-108/Cys-122.

This sequence belongs to the fungal hydrophobin family. As to quaternary structure, self-assembles to form functional amyloid fibrils called rodlets. Self-assembly into fibrillar rodlets occurs spontaneously at hydrophobic:hydrophilic interfaces and the rodlets further associate laterally to form amphipathic monolayers.

The protein resides in the secreted. The protein localises to the cell wall. Aerial growth, conidiation, and dispersal of filamentous fungi in the environment rely upon a capability of their secreting small amphipathic proteins called hydrophobins (HPBs) with low sequence identity. Class I can self-assemble into an outermost layer of rodlet bundles on aerial cell surfaces, conferring cellular hydrophobicity that supports fungal growth, development and dispersal; whereas Class II form highly ordered films at water-air interfaces through intermolecular interactions but contribute nothing to the rodlet structure. RodF and rodG belong to Class III, which contains hydrophobins with intermediate (between classes I and II) or atypical characteristics. RodG, unlike rodA, is not required for rodlet formation. The sequence is that of Class III hydrophobin G from Aspergillus fumigatus (strain ATCC MYA-4609 / CBS 101355 / FGSC A1100 / Af293) (Neosartorya fumigata).